The chain runs to 205 residues: Protein phosphatase inhibitor 2 (205 aa).

A disordered region spans residues 1-44 (MAASTASHRPIKGILKNKTSTTSSVVASAEQPRRTVEEELSKKS). Ala2 is modified (N-acetylalanine). The required for binding PPP1CC stretch occupies residues 12-17 (KGILKN). Positions 19 to 29 (TSTTSSVVASA) are enriched in low complexity. Basic and acidic residues predominate over residues 31–44 (QPRRTVEEELSKKS). The required for binding PPP1CC stretch occupies residues 43–55 (KSQKWDEMNILAT). The residue at position 44 (Ser44) is a Phosphoserine; by ATM. Residue Thr73 is modified to Phosphothreonine; by GSK3. Ser87 and Ser89 each carry phosphoserine. 2 positions are modified to phosphothreonine: Thr96 and Thr116. The interval 104–142 (LAAAEGSEPKFRTREQESSGEEDNDLSPEEREKKRQFEM) is disordered. A compositionally biased stretch (basic and acidic residues) spans 110-120 (SEPKFRTREQE). Residues Ser121, Ser122, and Ser130 each carry the phosphoserine modification. The span at 121-130 (SSGEEDNDLS) shows a compositional bias: acidic residues. Residues 131-142 (PEEREKKRQFEM) are compositionally biased toward basic and acidic residues. The required for binding PPP1CC catalytic center, displacing metal ions and inhibition of PPP1CC catalytic activity stretch occupies residues 147–150 (HYNE). The disordered stretch occupies residues 163–205 (KDLHDDDEDEEMSETADADSMNIEESNQGSTAGDHLQHKSQSS). Acidic residues predominate over residues 167 to 179 (DDDEDEEMSETAD).

Belongs to the protein phosphatase inhibitor 2 family. Heterodimer with PP1. In terms of processing, phosphorylation on Ser-44 by ATM activates PP1 by dissociating the PP1-PPP1R2 complex. Phosphorylation on Thr-73 by GSK3 activates PP1 by dissociating the PP1-PPP1R2 complex. In terms of tissue distribution, central nervous system.

Functionally, inhibitor of protein-phosphatase 1. In Rattus norvegicus (Rat), this protein is Protein phosphatase inhibitor 2 (Ppp1r2).